The sequence spans 785 residues: Endonuclease MutS2 (785 aa).

334 to 341 (GPNTGGKT) lines the ATP pocket. In terms of domain architecture, Smr spans 710 to 785 (LDLRGQRYDE…GNGATIVKLK (76 aa)).

It belongs to the DNA mismatch repair MutS family. MutS2 subfamily. Homodimer. Binds to stalled ribosomes, contacting rRNA.

Endonuclease that is involved in the suppression of homologous recombination and thus may have a key role in the control of bacterial genetic diversity. Functionally, acts as a ribosome collision sensor, splitting the ribosome into its 2 subunits. Detects stalled/collided 70S ribosomes which it binds and splits by an ATP-hydrolysis driven conformational change. Acts upstream of the ribosome quality control system (RQC), a ribosome-associated complex that mediates the extraction of incompletely synthesized nascent chains from stalled ribosomes and their subsequent degradation. Probably generates substrates for RQC. In Lactobacillus helveticus (strain DPC 4571), this protein is Endonuclease MutS2.